We begin with the raw amino-acid sequence, 683 residues long: Leucine-rich repeat and calponin homology domain-containing protein 4 (683 aa).

Over residues 1–18 the composition is skewed to low complexity; it reads MAAAVAAPLAAGGEEAAA. The disordered stretch occupies residues 1-34; that stretch reads MAAAVAAPLAAGGEEAAATTSVPGSPGLPGRRSA. LRR repeat units lie at residues 41–64, 67–90, 92–113, 114–136, 138–158, 159–181, 182–204, 206–226, and 227–250; these read AVATGTLNLSNRRLKHFPRGAARS, LSDITQADLSRNRFPEVPEAACQL, SLEGLSLYHNCLRCLNPALGNL, TALTYLNLSRNQLSLLPPYICQL, LRVLIVSNNKLGALPPDIGTL, GSLRQLDVSSNELQSLPSELCGL, SSLRDLNVRRNQLSTLPEELGDL, LVRLDFSCNRVSRIPVSFCRL, and RHLQVILLDSNPLQSPPAQVCLKG. Residues 268 to 292 form a disordered region; sequence ALGDLAPSRPPSFSPCPAEDLFPGH. Phosphoserine occurs at positions 279, 281, 304, 307, 309, and 313. 2 disordered regions span residues 326 to 436 and 449 to 539; these read FRIS…LLKP and STQA…DEKD. Composition is skewed to basic and acidic residues over residues 330–345, 357–376, and 384–418; these read ELAREPRGPRERKEDG, IDSHVPGEDEERGTVEEQRP, and GDRERAPSSRREEPAGEERRRPDTLQLWQERERRQ. 2 positions are modified to phosphoserine: Ser432 and Ser457. A compositionally biased stretch (polar residues) spans 449–460; sequence STQAMHNGSPKS. Low complexity-rich tracts occupy residues 461-481 and 511-524; these read SASQAGAAAGQGAPAPAPASQ and SSSQSGSGPSSPDS. Phosphoserine is present on residues Ser511, Ser513, Ser517, Ser521, and Ser589. Positions 534 to 647 constitute a Calponin-homology (CH) domain; it reads VPDEKDLMTQ…ALEAVKRVGG (114 aa). Residues 653-673 traverse the membrane as a helical segment; it reads LWPPSGLGGFVVFYVVLMLLL.

Its subcellular location is the cell membrane. Functionally, accessory protein that regulates signaling by multiple TLRs, acting as a broad-spanning regulator of the innate immune response. In macrophages, binds LPS and promotes proper docking of LPS in lipid raft membrane. May be required for lipid raft maintenance. This Homo sapiens (Human) protein is Leucine-rich repeat and calponin homology domain-containing protein 4.